The primary structure comprises 250 residues: 2,3-bisphosphoglycerate-dependent phosphoglycerate mutase (250 aa).

Residues Arg10–Asn17, Thr23–Gly24, Arg62, Glu89–Tyr92, Lys100, Arg116–Arg117, and Gly185–Asn186 contribute to the substrate site. Catalysis depends on His11, which acts as the Tele-phosphohistidine intermediate. Residue Glu89 is the Proton donor/acceptor of the active site.

Belongs to the phosphoglycerate mutase family. BPG-dependent PGAM subfamily. In terms of assembly, homodimer.

The enzyme catalyses (2R)-2-phosphoglycerate = (2R)-3-phosphoglycerate. The protein operates within carbohydrate degradation; glycolysis; pyruvate from D-glyceraldehyde 3-phosphate: step 3/5. In terms of biological role, catalyzes the interconversion of 2-phosphoglycerate and 3-phosphoglycerate. The protein is 2,3-bisphosphoglycerate-dependent phosphoglycerate mutase of Citrobacter koseri (strain ATCC BAA-895 / CDC 4225-83 / SGSC4696).